A 178-amino-acid chain; its full sequence is uncharacterized protein (178 aa).

The protein localises to the mitochondrion. This is an uncharacterized protein from Paramecium tetraurelia.